An 884-amino-acid polypeptide reads, in one-letter code: Protein argonaute-4 (884 aa).

The 120-residue stretch at 242–361 folds into the PAZ domain; it reads PVIEFMCEVL…LPLEVCNIVA (120 aa). Residues 532 to 843 enclose the Piwi domain; it reads LIVVILPGKT…VAFRARYHLV (312 aa). A disordered region spans residues 848-870; that stretch reads DSAEGSHVSGQSNGRDPQALAKA.

This sequence belongs to the argonaute family. Ago subfamily.

The protein localises to the cytoplasm. The protein resides in the P-body. In terms of biological role, required for RNA-mediated gene silencing (RNAi). Binds to short RNAs such as microRNAs (miRNAs) and represses the translation of mRNAs which are complementary to them. Lacks endonuclease activity and does not appear to cleave target mRNAs. This is Protein argonaute-4 (ago4) from Xenopus laevis (African clawed frog).